A 152-amino-acid polypeptide reads, in one-letter code: Urease accessory protein UreE (152 aa).

Belongs to the UreE family.

The protein localises to the cytoplasm. Involved in urease metallocenter assembly. Binds nickel. Probably functions as a nickel donor during metallocenter assembly. The polypeptide is Urease accessory protein UreE (Psychromonas ingrahamii (strain DSM 17664 / CCUG 51855 / 37)).